The primary structure comprises 1107 residues: Dynein axonemal assembly factor 1 homolog (1107 aa).

LRR repeat units lie at residues 34 to 56, 57 to 78, 79 to 100, 101 to 122, 125 to 146, and 150 to 171; these read HLNDILYLNYSGYNAIESLEEYV, GLKCLWLECNAISEIKGLEYQT, ELKCLYLQNNLITKIENLDSCK, QLDTLNLSHNHITRIENCGHDI, VLNTLNLSHNYLKTADNLDHLR, and FVSVLDLSHNRIEDIAIVKILG. Positions 184–223 constitute an LRRCT domain; sequence NPVVNEIPSYRKTLILECKNLTYLDTRPVFDRDRACAEAW. Disordered stretches follow at residues 258–281, 428–487, 500–608, 780–810, 834–855, and 1070–1107; these read HRGDGEPELLKTSSDEEDEDKASK, NESP…TLNV, ESKD…LEKE, KEEPKAPETPSIESEEEIPEELEVHSSEHEQ, SSEDLKSNFDDSSESSDSAEED, and AAHAGEVMQDTEDVESKPVEIDGTKEETVDSELADNCD. Polar residues predominate over residues 428–437; that stretch reads NESPLTSPSF. The segment covering 446–459 has biased composition (acidic residues); it reads EEIEPTDVEEEQQI. Residues 500–512 show a composition bias toward basic and acidic residues; the sequence is ESKDGELISKVES. Positions 531 to 544 are enriched in acidic residues; sequence DNSESEPTDITNED. Residues 549-560 show a composition bias toward low complexity; it reads SSSVSVTSSTDS. Polar residues predominate over residues 581–597; that stretch reads NYRQDSTTSTDSENEVS. Over residues 801–810 the composition is skewed to basic and acidic residues; the sequence is LEVHSSEHEQ. The span at 844–855 shows a compositional bias: acidic residues; it reads DSSESSDSAEED. Over residues 1083–1097 the composition is skewed to basic and acidic residues; that stretch reads VESKPVEIDGTKEET. Over residues 1098 to 1107 the composition is skewed to acidic residues; the sequence is VDSELADNCD.

The protein belongs to the DNAAF1 family.

Its subcellular location is the cell projection. It localises to the cilium. Cilium-specific protein required for cilia structures. In Aedes aegypti (Yellowfever mosquito), this protein is Dynein axonemal assembly factor 1 homolog.